A 113-amino-acid chain; its full sequence is Large ribosomal subunit protein uL22 (113 aa).

Belongs to the universal ribosomal protein uL22 family. Part of the 50S ribosomal subunit.

Functionally, this protein binds specifically to 23S rRNA; its binding is stimulated by other ribosomal proteins, e.g. L4, L17, and L20. It is important during the early stages of 50S assembly. It makes multiple contacts with different domains of the 23S rRNA in the assembled 50S subunit and ribosome. Its function is as follows. The globular domain of the protein is located near the polypeptide exit tunnel on the outside of the subunit, while an extended beta-hairpin is found that lines the wall of the exit tunnel in the center of the 70S ribosome. The sequence is that of Large ribosomal subunit protein uL22 from Halalkalibacterium halodurans (strain ATCC BAA-125 / DSM 18197 / FERM 7344 / JCM 9153 / C-125) (Bacillus halodurans).